Consider the following 220-residue polypeptide: Recombination protein RecR (220 aa).

The C4-type zinc finger occupies 57–72 (CPICFNITDAEKCDVC). One can recognise a Toprim domain in the interval 80–173 (RTICVVEEPG…AISRIAYGVP (94 aa)). The disordered stretch occupies residues 190–220 (LTGRQTVSKPQPPQRPGDEDGADGAAVPASR).

Belongs to the RecR family.

May play a role in DNA repair. It seems to be involved in an RecBC-independent recombinational process of DNA repair. It may act with RecF and RecO. The chain is Recombination protein RecR from Deinococcus radiodurans (strain ATCC 13939 / DSM 20539 / JCM 16871 / CCUG 27074 / LMG 4051 / NBRC 15346 / NCIMB 9279 / VKM B-1422 / R1).